Consider the following 412-residue polypeptide: Glucose-1-phosphate adenylyltransferase (412 aa).

Residues tyrosine 98, glycine 163, 178–179 (EK), and serine 189 contribute to the alpha-D-glucose 1-phosphate site.

It belongs to the bacterial/plant glucose-1-phosphate adenylyltransferase family. In terms of assembly, homotetramer.

It catalyses the reaction alpha-D-glucose 1-phosphate + ATP + H(+) = ADP-alpha-D-glucose + diphosphate. It functions in the pathway glycan biosynthesis; glycogen biosynthesis. Its function is as follows. Involved in the biosynthesis of ADP-glucose, a building block required for the elongation reactions to produce glycogen. Catalyzes the reaction between ATP and alpha-D-glucose 1-phosphate (G1P) to produce pyrophosphate and ADP-Glc. The protein is Glucose-1-phosphate adenylyltransferase of Thermosipho africanus (strain TCF52B).